The sequence spans 241 residues: Capsid protein (241 aa).

Residues 1–26 (MSPASSWKRKRPSSSSAQASKKRRVY) carry the Bipartite nuclear localization signal motif. Positions 1-30 (MSPASSWKRKRPSSSSAQASKKRRVYRPAV) are disordered.

This sequence belongs to the geminiviridae capsid protein family. Homomultimer. Interacts with the movement protein. Binds to single-stranded and double-stranded viral DNA.

The protein localises to the virion. Its subcellular location is the host nucleus. Its function is as follows. Encapsidates the viral genome into characteristic twinned ('geminate') particles. Binds the genomic viral ssDNA and shuttles it into and out of the cell nucleus. Plays a role in protection of the genome from degradation, virus acquisition and transmission by insect vectors, infectivity, and systemic movement. The CP of monopartite geminiviruses is absolutely essential for virus movement. This Avena sativa (Oat) protein is Capsid protein.